Reading from the N-terminus, the 572-residue chain is Urease subunit alpha (572 aa).

In terms of domain architecture, Urease spans 136 to 572; it reads GGIDTHIHWI…VPLAQRYFLF (437 aa). Ni(2+) contacts are provided by H141, H143, and K224. Position 224 is an N6-carboxylysine (K224). H226 contributes to the substrate binding site. Ni(2+)-binding residues include H253 and H279. Catalysis depends on H327, which acts as the Proton donor. D367 provides a ligand contact to Ni(2+).

It belongs to the metallo-dependent hydrolases superfamily. Urease alpha subunit family. As to quaternary structure, heterotrimer of UreA (gamma), UreB (beta) and UreC (alpha) subunits. Three heterotrimers associate to form the active enzyme. Requires Ni cation as cofactor. Post-translationally, carboxylation allows a single lysine to coordinate two nickel ions.

Its subcellular location is the cytoplasm. It carries out the reaction urea + 2 H2O + H(+) = hydrogencarbonate + 2 NH4(+). The protein operates within nitrogen metabolism; urea degradation; CO(2) and NH(3) from urea (urease route): step 1/1. The sequence is that of Urease subunit alpha from Actinobacillus pleuropneumoniae serotype 7 (strain AP76).